The primary structure comprises 205 residues: GTP cyclohydrolase-2 (205 aa).

49–53 (RLHSE) contributes to the GTP binding site. Residues C54, C65, and C67 each coordinate Zn(2+). Residues Q70, 92-94 (EGR), and T114 contribute to the GTP site. D126 (proton acceptor) is an active-site residue. R128 acts as the Nucleophile in catalysis. Positions 149 and 154 each coordinate GTP.

This sequence belongs to the GTP cyclohydrolase II family. It depends on Zn(2+) as a cofactor.

It catalyses the reaction GTP + 4 H2O = 2,5-diamino-6-hydroxy-4-(5-phosphoribosylamino)-pyrimidine + formate + 2 phosphate + 3 H(+). It participates in cofactor biosynthesis; riboflavin biosynthesis; 5-amino-6-(D-ribitylamino)uracil from GTP: step 1/4. Catalyzes the conversion of GTP to 2,5-diamino-6-ribosylamino-4(3H)-pyrimidinone 5'-phosphate (DARP), formate and pyrophosphate. In Pseudomonas paraeruginosa (strain DSM 24068 / PA7) (Pseudomonas aeruginosa (strain PA7)), this protein is GTP cyclohydrolase-2.